Reading from the N-terminus, the 535-residue chain is Inositol 1,4,5-trisphosphate receptor-interacting protein-like 2 (535 aa).

An N-terminal signal peptide occupies residues 1–32 (MSVRYTLNLRVFWPLVTGLCTALVCLYHALRS). The Extracellular portion of the chain corresponds to 33-43 (SEDARAESPDG). A helical membrane pass occupies residues 44 to 64 (ADSGFPLLKVAILLLLGYILL). Residues 65–535 (RCRHAIRQRL…RIQGSPEDEP (471 aa)) lie on the Cytoplasmic side of the membrane. S139 carries the phosphoserine modification.

The protein belongs to the ITPRIP family.

Its subcellular location is the membrane. This is Inositol 1,4,5-trisphosphate receptor-interacting protein-like 2 (Itpripl2) from Mus musculus (Mouse).